The chain runs to 610 residues: Membrane protein insertase YidC (610 aa).

Residues 7 to 27 traverse the membrane as a helical segment; the sequence is FFITIALSILILALWQVFYLG. Positions 36–82 are disordered; it reads QARIEEQQRQAQQAAQNRQASSSTGDTPQMPANPDSIPGQGDTKAAG. A compositionally biased stretch (low complexity) spans 44-55; sequence RQAQQAAQNRQA. 5 helical membrane passes run 358-378, 387-407, 458-478, 510-530, and 546-566; these read FDLL…FYLI, NFGV…FPLA, WPVL…YVTI, TVPH…TMFL, and IFTW…AGLV.

This sequence belongs to the OXA1/ALB3/YidC family. Type 1 subfamily. Interacts with the Sec translocase complex via SecD. Specifically interacts with transmembrane segments of nascent integral membrane proteins during membrane integration.

The protein localises to the cell inner membrane. In terms of biological role, required for the insertion and/or proper folding and/or complex formation of integral membrane proteins into the membrane. Involved in integration of membrane proteins that insert both dependently and independently of the Sec translocase complex, as well as at least some lipoproteins. Aids folding of multispanning membrane proteins. In Brucella suis biovar 1 (strain 1330), this protein is Membrane protein insertase YidC.